Reading from the N-terminus, the 365-residue chain is Succinyl-diaminopimelate desuccinylase (365 aa).

Zn(2+) is bound at residue His65. Asp67 is an active-site residue. Position 96 (Asp96) interacts with Zn(2+). Glu126 functions as the Proton acceptor in the catalytic mechanism. Residues Glu127, Glu155, and His340 each contribute to the Zn(2+) site.

This sequence belongs to the peptidase M20A family. DapE subfamily. In terms of assembly, homodimer. Zn(2+) serves as cofactor. Requires Co(2+) as cofactor.

The enzyme catalyses N-succinyl-(2S,6S)-2,6-diaminopimelate + H2O = (2S,6S)-2,6-diaminopimelate + succinate. It functions in the pathway amino-acid biosynthesis; L-lysine biosynthesis via DAP pathway; LL-2,6-diaminopimelate from (S)-tetrahydrodipicolinate (succinylase route): step 3/3. Catalyzes the hydrolysis of N-succinyl-L,L-diaminopimelic acid (SDAP), forming succinate and LL-2,6-diaminopimelate (DAP), an intermediate involved in the bacterial biosynthesis of lysine and meso-diaminopimelic acid, an essential component of bacterial cell walls. The protein is Succinyl-diaminopimelate desuccinylase of Campylobacter jejuni subsp. jejuni serotype O:2 (strain ATCC 700819 / NCTC 11168).